Reading from the N-terminus, the 115-residue chain is Iron-sulfur cluster insertion protein ErpA (115 aa).

Cysteine 43, cysteine 107, and cysteine 109 together coordinate iron-sulfur cluster.

It belongs to the HesB/IscA family. As to quaternary structure, homodimer. It depends on iron-sulfur cluster as a cofactor.

Functionally, required for insertion of 4Fe-4S clusters for at least IspG. This is Iron-sulfur cluster insertion protein ErpA from Photorhabdus laumondii subsp. laumondii (strain DSM 15139 / CIP 105565 / TT01) (Photorhabdus luminescens subsp. laumondii).